The following is a 92-amino-acid chain: Parbolysin P7 (92 aa).

Cystine bridges form between Cys15-Cys36, Cys21-Cys32, and Cys46-Cys59.

The protein belongs to the worm cytolysin family. Localized within the skin and proboscis and are most readily isolated from body mucus secretions.

It is found in the secreted. Cytolysin that shows hemolytic activity (on bovine erythrocytes, HC(50)=5.75 mg/ml). This hemolytic activity is completely inhibited by small unilamelar vesicles composed of PC/PG, PC/PI and PC/PS in 1:1 molar ratios (with at least 100 mg/ml concentration). In Parborlasia corrugatus (Antarctic nemertean worm), this protein is Parbolysin P7.